A 394-amino-acid polypeptide reads, in one-letter code: Ketoisovalerate oxidoreductase subunit VorA (394 aa).

As to quaternary structure, heterotetramer of one alpha, one beta, one delta and one gamma chain.

It catalyses the reaction 3-methyl-2-oxobutanoate + 2 oxidized [2Fe-2S]-[ferredoxin] + CoA = 2-methylpropanoyl-CoA + 2 reduced [2Fe-2S]-[ferredoxin] + CO2 + H(+). The chain is Ketoisovalerate oxidoreductase subunit VorA (vorA) from Pyrococcus horikoshii (strain ATCC 700860 / DSM 12428 / JCM 9974 / NBRC 100139 / OT-3).